The primary structure comprises 386 residues: Succinate--CoA ligase [ADP-forming] subunit beta (386 aa).

Residues 9–244 form the ATP-grasp domain; it reads KEILRKYGVS…LDEEDPKEIE (236 aa). Residues Lys46, 53 to 55, Glu99, Cys102, and Glu107 each bind ATP; that span reads GRG. Residues Asn199 and Asp213 each contribute to the Mg(2+) site. Substrate-binding positions include Asn264 and 321 to 323; that span reads GIM.

This sequence belongs to the succinate/malate CoA ligase beta subunit family. Heterotetramer of two alpha and two beta subunits. It depends on Mg(2+) as a cofactor.

The enzyme catalyses succinate + ATP + CoA = succinyl-CoA + ADP + phosphate. The catalysed reaction is GTP + succinate + CoA = succinyl-CoA + GDP + phosphate. The protein operates within carbohydrate metabolism; tricarboxylic acid cycle; succinate from succinyl-CoA (ligase route): step 1/1. Succinyl-CoA synthetase functions in the citric acid cycle (TCA), coupling the hydrolysis of succinyl-CoA to the synthesis of either ATP or GTP and thus represents the only step of substrate-level phosphorylation in the TCA. The beta subunit provides nucleotide specificity of the enzyme and binds the substrate succinate, while the binding sites for coenzyme A and phosphate are found in the alpha subunit. The chain is Succinate--CoA ligase [ADP-forming] subunit beta from Bacillus pumilus (strain SAFR-032).